We begin with the raw amino-acid sequence, 391 residues long: ATP phosphoribosyltransferase regulatory subunit (391 aa).

It belongs to the class-II aminoacyl-tRNA synthetase family. HisZ subfamily. In terms of assembly, heteromultimer composed of HisG and HisZ subunits.

It is found in the cytoplasm. Its pathway is amino-acid biosynthesis; L-histidine biosynthesis; L-histidine from 5-phospho-alpha-D-ribose 1-diphosphate: step 1/9. In terms of biological role, required for the first step of histidine biosynthesis. May allow the feedback regulation of ATP phosphoribosyltransferase activity by histidine. This is ATP phosphoribosyltransferase regulatory subunit from Prochlorococcus marinus (strain NATL1A).